We begin with the raw amino-acid sequence, 405 residues long: Arginine biosynthesis bifunctional protein ArgJ (405 aa).

Residues M1 to S18 show a composition bias toward polar residues. The segment at M1–L21 is disordered. Substrate is bound by residues T167, K189, T200, E281, N400, and T405. T200 acts as the Nucleophile in catalysis.

The protein belongs to the ArgJ family. In terms of assembly, heterotetramer of two alpha and two beta chains.

The protein localises to the cytoplasm. The catalysed reaction is N(2)-acetyl-L-ornithine + L-glutamate = N-acetyl-L-glutamate + L-ornithine. It carries out the reaction L-glutamate + acetyl-CoA = N-acetyl-L-glutamate + CoA + H(+). Its pathway is amino-acid biosynthesis; L-arginine biosynthesis; L-ornithine and N-acetyl-L-glutamate from L-glutamate and N(2)-acetyl-L-ornithine (cyclic): step 1/1. The protein operates within amino-acid biosynthesis; L-arginine biosynthesis; N(2)-acetyl-L-ornithine from L-glutamate: step 1/4. Catalyzes two activities which are involved in the cyclic version of arginine biosynthesis: the synthesis of N-acetylglutamate from glutamate and acetyl-CoA as the acetyl donor, and of ornithine by transacetylation between N(2)-acetylornithine and glutamate. This is Arginine biosynthesis bifunctional protein ArgJ from Corynebacterium jeikeium (strain K411).